Consider the following 358-residue polypeptide: Peptide chain release factor 1 (358 aa).

Gln-237 carries the post-translational modification N5-methylglutamine.

It belongs to the prokaryotic/mitochondrial release factor family. Methylated by PrmC. Methylation increases the termination efficiency of RF1.

The protein localises to the cytoplasm. Peptide chain release factor 1 directs the termination of translation in response to the peptide chain termination codons UAG and UAA. The polypeptide is Peptide chain release factor 1 (Mycoplasma mobile (strain ATCC 43663 / 163K / NCTC 11711) (Mesomycoplasma mobile)).